Reading from the N-terminus, the 872-residue chain is MKELSSAQIRQMWLDFWKSKGHCVEPSANLVPVNDPTLLWINSGVATLKKYFDGSVIPENPRITNAQKSIRTNDIENVGKTARHHTMFEMLGNFSIGDYFRDEAIEWGFELLTSPDWFDFPKDKLYMTYYPDDKDSYNRWIACGVEPSHLVPIEDNFWEIGAGPSGPDTEIFFDRGEDFDPENIGLRLLAEDIENDRYIEIWNIVLSQFNADPAVPRSEYKELPNKNIDTGAGLERLAAVMQGAKTNFETDLFMPIIREVEKLSGKTYNPDGDNMSFKVIADHIRALSFAIGDGALPGNEGRGYVLRRLLRRAVMHGRRLGINETFLYKLVPTVGQIMESYYPEVLEKHDFIEKIVKREEETFARTIDAGSGHLDSLLAQLKAEGKDTLEGKDIFKLYDTYGFPVELTEELAEDAGYKIDHEGFKSAMKEQQDRARAAVVKGGSMGMQNETLAGIVEESRFEYDTYSLESSLSVIIADNERTEAVSEGQALLVFAQTPFYAEMGGQVADTGRIKNDKGDTVAEVVDVQKAPNGQPLHTVNVLASLSVGTNYTLEINKERRLAVEKNHTATHLLHAALHNVIGEHATQAGSLNEEEFLRFDFTHFEAVSNEELRHIEQEVNEQIWNALTITTTETDVETAKEMGAMALFGEKYGKVVRVVQIGNYSVELCGGTHLNNSSEIGLFKIVKEEGIGSGTRRIIAVTGRQAFEAYRNQEDALKEIAATVKAPQLKDAAAKVQALSDSLRDLQKENAELKEKAAAAAAGDVFKDVQEAKGVRFIASQVDVADAGALRTFADNWKQKDYSDVLVLVAAIGEKVNVLVASKTKDVHAGNMIKELAPIVAGRGGGKPDMAMAGGSDASKIAELLAAVAETV.

4 residues coordinate Zn(2+): H567, H571, C669, and H673.

The protein belongs to the class-II aminoacyl-tRNA synthetase family. Zn(2+) is required as a cofactor.

Its subcellular location is the cytoplasm. It catalyses the reaction tRNA(Ala) + L-alanine + ATP = L-alanyl-tRNA(Ala) + AMP + diphosphate. In terms of biological role, catalyzes the attachment of alanine to tRNA(Ala) in a two-step reaction: alanine is first activated by ATP to form Ala-AMP and then transferred to the acceptor end of tRNA(Ala). Also edits incorrectly charged Ser-tRNA(Ala) and Gly-tRNA(Ala) via its editing domain. This is Alanine--tRNA ligase from Streptococcus pyogenes serotype M12 (strain MGAS2096).